The chain runs to 430 residues: Serine--tRNA ligase (430 aa).

238–240 (TAE) contributes to the L-serine binding site. An ATP-binding site is contributed by 269–271 (RRE). Glu-292 serves as a coordination point for L-serine. 356–359 (EISS) is an ATP binding site. Ser-392 contacts L-serine.

This sequence belongs to the class-II aminoacyl-tRNA synthetase family. Type-1 seryl-tRNA synthetase subfamily. In terms of assembly, homodimer. The tRNA molecule binds across the dimer.

The protein localises to the cytoplasm. It catalyses the reaction tRNA(Ser) + L-serine + ATP = L-seryl-tRNA(Ser) + AMP + diphosphate + H(+). The enzyme catalyses tRNA(Sec) + L-serine + ATP = L-seryl-tRNA(Sec) + AMP + diphosphate + H(+). Its pathway is aminoacyl-tRNA biosynthesis; selenocysteinyl-tRNA(Sec) biosynthesis; L-seryl-tRNA(Sec) from L-serine and tRNA(Sec): step 1/1. Catalyzes the attachment of serine to tRNA(Ser). Is also able to aminoacylate tRNA(Sec) with serine, to form the misacylated tRNA L-seryl-tRNA(Sec), which will be further converted into selenocysteinyl-tRNA(Sec). This Synechocystis sp. (strain ATCC 27184 / PCC 6803 / Kazusa) protein is Serine--tRNA ligase.